The sequence spans 314 residues: 4-hydroxy-3-methylbut-2-enyl diphosphate reductase (314 aa).

Residue Cys12 coordinates [4Fe-4S] cluster. (2E)-4-hydroxy-3-methylbut-2-enyl diphosphate contacts are provided by His41 and His74. Positions 41 and 74 each coordinate dimethylallyl diphosphate. His41 and His74 together coordinate isopentenyl diphosphate. Residue Cys96 participates in [4Fe-4S] cluster binding. (2E)-4-hydroxy-3-methylbut-2-enyl diphosphate is bound at residue His124. His124 contacts dimethylallyl diphosphate. Residue His124 participates in isopentenyl diphosphate binding. Catalysis depends on Glu126, which acts as the Proton donor. Residue Thr167 coordinates (2E)-4-hydroxy-3-methylbut-2-enyl diphosphate. Cys197 serves as a coordination point for [4Fe-4S] cluster. (2E)-4-hydroxy-3-methylbut-2-enyl diphosphate is bound by residues Ser225, Ser226, Asn227, and Ser269. The dimethylallyl diphosphate site is built by Ser225, Ser226, Asn227, and Ser269. Isopentenyl diphosphate contacts are provided by Ser225, Ser226, Asn227, and Ser269.

This sequence belongs to the IspH family. It depends on [4Fe-4S] cluster as a cofactor.

The enzyme catalyses isopentenyl diphosphate + 2 oxidized [2Fe-2S]-[ferredoxin] + H2O = (2E)-4-hydroxy-3-methylbut-2-enyl diphosphate + 2 reduced [2Fe-2S]-[ferredoxin] + 2 H(+). The catalysed reaction is dimethylallyl diphosphate + 2 oxidized [2Fe-2S]-[ferredoxin] + H2O = (2E)-4-hydroxy-3-methylbut-2-enyl diphosphate + 2 reduced [2Fe-2S]-[ferredoxin] + 2 H(+). It participates in isoprenoid biosynthesis; dimethylallyl diphosphate biosynthesis; dimethylallyl diphosphate from (2E)-4-hydroxy-3-methylbutenyl diphosphate: step 1/1. Its pathway is isoprenoid biosynthesis; isopentenyl diphosphate biosynthesis via DXP pathway; isopentenyl diphosphate from 1-deoxy-D-xylulose 5-phosphate: step 6/6. Catalyzes the conversion of 1-hydroxy-2-methyl-2-(E)-butenyl 4-diphosphate (HMBPP) into a mixture of isopentenyl diphosphate (IPP) and dimethylallyl diphosphate (DMAPP). Acts in the terminal step of the DOXP/MEP pathway for isoprenoid precursor biosynthesis. The protein is 4-hydroxy-3-methylbut-2-enyl diphosphate reductase of Haemophilus influenzae (strain PittEE).